We begin with the raw amino-acid sequence, 156 residues long: Crossover junction endodeoxyribonuclease RuvC (156 aa).

Catalysis depends on residues aspartate 9, glutamate 69, and aspartate 141. The Mg(2+) site is built by aspartate 9, glutamate 69, and aspartate 141.

Belongs to the RuvC family. As to quaternary structure, homodimer which binds Holliday junction (HJ) DNA. The HJ becomes 2-fold symmetrical on binding to RuvC with unstacked arms; it has a different conformation from HJ DNA in complex with RuvA. In the full resolvosome a probable DNA-RuvA(4)-RuvB(12)-RuvC(2) complex forms which resolves the HJ. Requires Mg(2+) as cofactor.

It localises to the cytoplasm. It carries out the reaction Endonucleolytic cleavage at a junction such as a reciprocal single-stranded crossover between two homologous DNA duplexes (Holliday junction).. The RuvA-RuvB-RuvC complex processes Holliday junction (HJ) DNA during genetic recombination and DNA repair. Endonuclease that resolves HJ intermediates. Cleaves cruciform DNA by making single-stranded nicks across the HJ at symmetrical positions within the homologous arms, yielding a 5'-phosphate and a 3'-hydroxyl group; requires a central core of homology in the junction. The consensus cleavage sequence is 5'-(A/T)TT(C/G)-3'. Cleavage occurs on the 3'-side of the TT dinucleotide at the point of strand exchange. HJ branch migration catalyzed by RuvA-RuvB allows RuvC to scan DNA until it finds its consensus sequence, where it cleaves and resolves the cruciform DNA. This is Crossover junction endodeoxyribonuclease RuvC from Acaryochloris marina (strain MBIC 11017).